Reading from the N-terminus, the 172-residue chain is C-phycocyanin-2 beta subunit (172 aa).

The residue at position 72 (N72) is an N4-methylasparagine. (2R,3E)-phycocyanobilin-binding residues include C82 and C153.

The protein belongs to the phycobiliprotein family. Heterodimer of an alpha and a beta subunit, which further assembles into trimers and the trimers into hexamers. In terms of processing, contains two covalently linked bilin chromophores.

The protein resides in the cellular thylakoid membrane. Its function is as follows. Light-harvesting photosynthetic bile pigment-protein from the phycobiliprotein complex (phycobilisome, PBS). Phycocyanin is the major phycobiliprotein in the PBS rod. The polypeptide is C-phycocyanin-2 beta subunit (cpcB2) (Pseudanabaena tenuis (strain PCC 7409)).